Here is a 915-residue protein sequence, read N- to C-terminus: Protein translocase subunit SecA (915 aa).

Residues Q87, 105–109 (GEGKT), and D516 each bind ATP. A disordered region spans residues 866-915 (MTYGAPSDGDIGGSVEDEPLELPEGARVGRNDPCPCGSGKKYKQCHGKLS). Residues C899, C901, C910, and H911 each coordinate Zn(2+). Residues 905 to 915 (KKYKQCHGKLS) show a composition bias toward basic residues.

This sequence belongs to the SecA family. As to quaternary structure, monomer and homodimer. Part of the essential Sec protein translocation apparatus which comprises SecA, SecYEG and auxiliary proteins SecDF-YajC and YidC. Zn(2+) serves as cofactor.

Its subcellular location is the cell inner membrane. The protein resides in the cytoplasm. The catalysed reaction is ATP + H2O + cellular proteinSide 1 = ADP + phosphate + cellular proteinSide 2.. In terms of biological role, part of the Sec protein translocase complex. Interacts with the SecYEG preprotein conducting channel. Has a central role in coupling the hydrolysis of ATP to the transfer of proteins into and across the cell membrane, serving both as a receptor for the preprotein-SecB complex and as an ATP-driven molecular motor driving the stepwise translocation of polypeptide chains across the membrane. This is Protein translocase subunit SecA from Delftia acidovorans (strain DSM 14801 / SPH-1).